The following is a 300-amino-acid chain: MQKYDVKTFQGLILALQDYWAQQGCVIIQPLDMEVGAGTFHPQTFLKSIGPEPMSSAYVQPCRRPTDGRYGENPNRLQHYYQFQVVLKPSPDNIQELYLGSLAAVGIDTLTDEVRFVEDNWESPTLGAWGLGWEIWLNGMEVTQFTYFQQVGGIECSPVTGEITYGLERLAMYIQGVDSIYDLVWADGPLGRVTYGDVFHQNEVEQSTYNFEHANVEDLFAQFDKCEAESQKLIEANLPLPAYEQVMKASHAFNLLDARHAISVTERQRYILRVRALSKACAQSYYDKREALGFPLCKDK.

This sequence belongs to the class-II aminoacyl-tRNA synthetase family. In terms of assembly, tetramer of two alpha and two beta subunits.

The protein resides in the cytoplasm. It carries out the reaction tRNA(Gly) + glycine + ATP = glycyl-tRNA(Gly) + AMP + diphosphate. The sequence is that of Glycine--tRNA ligase alpha subunit from Pseudoalteromonas translucida (strain TAC 125).